Reading from the N-terminus, the 2435-residue chain is Highly reducing polyketide synthase ATR6 (2435 aa).

A Ketosynthase family 3 (KS3) domain is found at alanine 18–asparagine 450. Active-site for beta-ketoacyl synthase activity residues include cysteine 192, histidine 331, and histidine 371. Residues phenylalanine 586 to glycine 883 form a malonyl-CoA:ACP transacylase (MAT) domain region. The active-site For malonyltransferase activity is the serine 682. The segment at histidine 979–serine 1125 is N-terminal hotdog fold. The interval histidine 979–glycine 1291 is dehydratase (DH) domain. One can recognise a PKS/mFAS DH domain in the interval histidine 979–valine 1296. Histidine 1011 serves as the catalytic For beta-hydroxyacyl dehydratase activity. The interval glutamine 1141–valine 1296 is C-terminal hotdog fold. Positions glycine 1724–isoleucine 2037 are enoylreductase (ER) domain. A catalytic ketoreductase (KRc) domain region spans residues proline 2062–glycine 2301. The region spanning valine 2353–methionine 2429 is the Carrier domain. Serine 2389 is modified (O-(pantetheine 4'-phosphoryl)serine).

Its pathway is mycotoxin biosynthesis. Highly reducing polyketide synthase; part of the core atranone cluster (CAC) which products are predicted to catalyze most or all steps of mycotoxin atranone synthesis, starting from geranylgeranyl pyrophosphate (GGPP). The initial cyclization of GGPP to dolabellane is probably performed by the terpene cyclase ATR13. The Baeyer-Villiger oxidation near the end of the atranone synthesis, which converts atranones D and E to atranones F and G is predicted to be catalyzed by the monooxygenase ATR8. Of the CAC's other predicted gene products, the reducing PKS ATR6 might synthesize a polyketide chain. This polyketide is probably transferred onto the atranone backbone by the polyketide transferase ATR5. Other predicted CAC products include 4 oxygenases (ATR2, ATR3, ATR4, and ATR14), 3 short-chain reductases (ATR7, ATR9, and ATR10), and a methyltransferase (ATR12). These may all be involved in the various steps of atranone biosynthesis, although their specific roles must await experimental determination. The protein is Highly reducing polyketide synthase ATR6 of Stachybotrys chlorohalonatus (strain IBT 40285).